The sequence spans 129 residues: Small ribosomal subunit protein uS11 (129 aa).

This sequence belongs to the universal ribosomal protein uS11 family. In terms of assembly, part of the 30S ribosomal subunit. Interacts with proteins S7 and S18. Binds to IF-3.

Its function is as follows. Located on the platform of the 30S subunit, it bridges several disparate RNA helices of the 16S rRNA. Forms part of the Shine-Dalgarno cleft in the 70S ribosome. This chain is Small ribosomal subunit protein uS11, found in Hydrogenovibrio crunogenus (strain DSM 25203 / XCL-2) (Thiomicrospira crunogena).